Here is a 135-residue protein sequence, read N- to C-terminus: DNA-directed RNA polymerase subunit omega (135 aa).

Belongs to the RNA polymerase subunit omega family. In terms of assembly, the RNAP catalytic core consists of 2 alpha, 1 beta, 1 beta' and 1 omega subunit. When a sigma factor is associated with the core the holoenzyme is formed, which can initiate transcription.

It carries out the reaction RNA(n) + a ribonucleoside 5'-triphosphate = RNA(n+1) + diphosphate. Functionally, promotes RNA polymerase assembly. Latches the N- and C-terminal regions of the beta' subunit thereby facilitating its interaction with the beta and alpha subunits. This is DNA-directed RNA polymerase subunit omega from Rhizobium meliloti (strain 1021) (Ensifer meliloti).